A 186-amino-acid polypeptide reads, in one-letter code: Elongation factor P (186 aa).

The protein belongs to the elongation factor P family.

It localises to the cytoplasm. Its pathway is protein biosynthesis; polypeptide chain elongation. In terms of biological role, involved in peptide bond synthesis. Stimulates efficient translation and peptide-bond synthesis on native or reconstituted 70S ribosomes in vitro. Probably functions indirectly by altering the affinity of the ribosome for aminoacyl-tRNA, thus increasing their reactivity as acceptors for peptidyl transferase. The sequence is that of Elongation factor P from Laribacter hongkongensis (strain HLHK9).